The chain runs to 444 residues: Ribosomal protein uS12 methylthiotransferase RimO (444 aa).

The MTTase N-terminal domain maps to 2–118; the sequence is PSIGLLSLGC…IVEVVNHALE (117 aa). Residues Cys-11, Cys-47, Cys-81, Cys-156, Cys-160, and Cys-163 each coordinate [4Fe-4S] cluster. One can recognise a Radical SAM core domain in the interval 142-372; that stretch reads STPSYTAYVK…MKLQREISLS (231 aa). Residues 375–444 enclose the TRAM domain; the sequence is QKRIGQEIEV…EYDLMGELAQ (70 aa).

The protein belongs to the methylthiotransferase family. RimO subfamily. The cofactor is [4Fe-4S] cluster.

Its subcellular location is the cytoplasm. It catalyses the reaction L-aspartate(89)-[ribosomal protein uS12]-hydrogen + (sulfur carrier)-SH + AH2 + 2 S-adenosyl-L-methionine = 3-methylsulfanyl-L-aspartate(89)-[ribosomal protein uS12]-hydrogen + (sulfur carrier)-H + 5'-deoxyadenosine + L-methionine + A + S-adenosyl-L-homocysteine + 2 H(+). Its function is as follows. Catalyzes the methylthiolation of an aspartic acid residue of ribosomal protein uS12. The chain is Ribosomal protein uS12 methylthiotransferase RimO from Desulforamulus reducens (strain ATCC BAA-1160 / DSM 100696 / MI-1) (Desulfotomaculum reducens).